Reading from the N-terminus, the 513-residue chain is 2,3-bisphosphoglycerate-independent phosphoglycerate mutase (513 aa).

The Mn(2+) site is built by D13 and S63. The Phosphoserine intermediate role is filled by S63. Residues H124, 154–155, R186, R192, 262–265, and K335 contribute to the substrate site; these read RD and RADR. 5 residues coordinate Mn(2+): D402, H406, D443, H444, and H462.

It belongs to the BPG-independent phosphoglycerate mutase family. In terms of assembly, monomer. It depends on Mn(2+) as a cofactor.

It catalyses the reaction (2R)-2-phosphoglycerate = (2R)-3-phosphoglycerate. Its pathway is carbohydrate degradation; glycolysis; pyruvate from D-glyceraldehyde 3-phosphate: step 3/5. Functionally, catalyzes the interconversion of 2-phosphoglycerate and 3-phosphoglycerate. In Photobacterium profundum (strain SS9), this protein is 2,3-bisphosphoglycerate-independent phosphoglycerate mutase.